We begin with the raw amino-acid sequence, 367 residues long: Putrescine/agmatine-binding protein (367 aa).

Residues 1-19 form the signal peptide; it reads MKKVCALALSILTTIGATA.

It belongs to the bacterial solute-binding protein 1 family.

The protein localises to the periplasm. In terms of biological role, binds putrescine and agmatine. The protein is Putrescine/agmatine-binding protein of Pseudomonas aeruginosa (strain ATCC 15692 / DSM 22644 / CIP 104116 / JCM 14847 / LMG 12228 / 1C / PRS 101 / PAO1).